The sequence spans 55 residues: MERVTLRIPEQQIDEVEQMVERGKFPNRSEAIRSAVREMIDEHTDKTGAKSWAKV.

It belongs to the CdrS family.

It is found in the cytoplasm. Its function is as follows. Transcriptional regulator which plays a central role in the regulation of cell division. Activates the expression of the gene encoding the cell division protein FtsZ2, and of other genes encoding proteins predicted to function in critical aspects of cell division. Required for normal cell division but not for cell elongation. May act during the transition from stasis to growth. The CdrSL-FtsZ2 transcriptional network might coordinate cell division timing with cell growth. This Halobacterium salinarum (strain ATCC 700922 / JCM 11081 / NRC-1) (Halobacterium halobium) protein is Transcriptional regulator CdrS.